Reading from the N-terminus, the 371-residue chain is Carnitine monooxygenase oxygenase subunit (371 aa).

The region spanning 44–152 is the Rieske domain; that stretch reads WICVAHSSEL…VEEYAGFLFI (109 aa). 4 residues coordinate [2Fe-2S] cluster: C86, H88, C106, and H109. Fe cation contacts are provided by H208, H213, and D323.

Belongs to the bacterial ring-hydroxylating dioxygenase alpha subunit family. CntA subfamily. As to quaternary structure, composed of an oxygenase subunit (cntA) and a reductase subunit (cntB). Requires [2Fe-2S] cluster as cofactor. It depends on Fe cation as a cofactor.

It carries out the reaction (R)-carnitine + NADH + O2 + H(+) = (3R)-3-hydroxy-4-oxobutanoate + trimethylamine + NAD(+) + H2O. The enzyme catalyses (R)-carnitine + NADPH + O2 + H(+) = (3R)-3-hydroxy-4-oxobutanoate + trimethylamine + NADP(+) + H2O. The protein operates within amine and polyamine metabolism; carnitine metabolism. Converts carnitine to trimethylamine and malic semialdehyde. The polypeptide is Carnitine monooxygenase oxygenase subunit (Acinetobacter baumannii (strain ATCC 19606 / DSM 30007 / JCM 6841 / CCUG 19606 / CIP 70.34 / NBRC 109757 / NCIMB 12457 / NCTC 12156 / 81)).